We begin with the raw amino-acid sequence, 345 residues long: S-adenosylmethionine:tRNA ribosyltransferase-isomerase (345 aa).

Belongs to the QueA family. Monomer.

The protein localises to the cytoplasm. It carries out the reaction 7-aminomethyl-7-carbaguanosine(34) in tRNA + S-adenosyl-L-methionine = epoxyqueuosine(34) in tRNA + adenine + L-methionine + 2 H(+). It participates in tRNA modification; tRNA-queuosine biosynthesis. Transfers and isomerizes the ribose moiety from AdoMet to the 7-aminomethyl group of 7-deazaguanine (preQ1-tRNA) to give epoxyqueuosine (oQ-tRNA). This is S-adenosylmethionine:tRNA ribosyltransferase-isomerase from Shewanella amazonensis (strain ATCC BAA-1098 / SB2B).